We begin with the raw amino-acid sequence, 409 residues long: S-adenosylmethionine synthase (409 aa).

His15 lines the ATP pocket. Residue Asp17 participates in Mg(2+) binding. Glu43 serves as a coordination point for K(+). L-methionine-binding residues include Glu56 and Gln100. The segment at 100 to 110 (QSSDIAQGVNE) is flexible loop. Residues 171-173 (DGK), 248-249 (KF), Asp257, 263-264 (RK), Ala280, and Lys284 contribute to the ATP site. Asp257 is an L-methionine binding site. Residue Lys288 participates in L-methionine binding.

The protein belongs to the AdoMet synthase family. As to quaternary structure, homotetramer; dimer of dimers. Requires Mg(2+) as cofactor. K(+) is required as a cofactor.

The protein resides in the cytoplasm. It catalyses the reaction L-methionine + ATP + H2O = S-adenosyl-L-methionine + phosphate + diphosphate. It participates in amino-acid biosynthesis; S-adenosyl-L-methionine biosynthesis; S-adenosyl-L-methionine from L-methionine: step 1/1. Functionally, catalyzes the formation of S-adenosylmethionine (AdoMet) from methionine and ATP. The overall synthetic reaction is composed of two sequential steps, AdoMet formation and the subsequent tripolyphosphate hydrolysis which occurs prior to release of AdoMet from the enzyme. In Prochlorococcus marinus (strain NATL1A), this protein is S-adenosylmethionine synthase.